The sequence spans 279 residues: 3-methyl-2-oxobutanoate hydroxymethyltransferase (279 aa).

Mg(2+) contacts are provided by Asp43 and Asp82. 3-methyl-2-oxobutanoate contacts are provided by residues 43–44 (DS), Asp82, and Lys112. Glu114 contacts Mg(2+). The active-site Proton acceptor is the Glu181.

Belongs to the PanB family. Homodecamer; pentamer of dimers. Requires Mg(2+) as cofactor.

It localises to the cytoplasm. The catalysed reaction is 3-methyl-2-oxobutanoate + (6R)-5,10-methylene-5,6,7,8-tetrahydrofolate + H2O = 2-dehydropantoate + (6S)-5,6,7,8-tetrahydrofolate. It participates in cofactor biosynthesis; (R)-pantothenate biosynthesis; (R)-pantoate from 3-methyl-2-oxobutanoate: step 1/2. Catalyzes the reversible reaction in which hydroxymethyl group from 5,10-methylenetetrahydrofolate is transferred onto alpha-ketoisovalerate to form ketopantoate. This chain is 3-methyl-2-oxobutanoate hydroxymethyltransferase, found in Geobacillus thermodenitrificans (strain NG80-2).